The primary structure comprises 666 residues: MSKALLAAWRINSLAPAPYPERLDTNDNALDRFLGSSLGQARLWASHLRLKRLRSFADKVVHRSNALSALSEAELAACVDDLRVKLARQGLTEDLTIEVFSLVREVCGRKLGLRHFPVQLIGGRVILAGKLAEMQTGEGKSLTAVLPAIAVALSGLPVHVITVNEYLVRRDARFMRPVYEFFGLDVGMVVPDQDPETRRNAYGCDVTYCVNKDLVFDYLRDRIDSNRDVSDARRAVARLFRGDENSRAYLRGLFFGIVDEADSVLIDEARTPLIISSSVSDKQGVDDYRRALDFCRQLRDGLHFRIFAADKLIQLTPAGRDHITNICGNLPGVWQVARARFELIEQALAAQLLYMRDKHYIVKDEKVQIVDEYTGRVMSDRTWESGLHQMIEVKEGCALTDRRKTISRITYQRFFRRYLRLGGMTGTAAEVVGELSAIFGLDVLRIPTNRAVQRKNLGTRIFLDTASRWDAVLKSIRRVRDEGRPVLIGTRSVAASEHLSSLLKTEGIEHSVINARQDEDEATVVEQAGRVGRVTVATNMAGRGTDIKLESGVSDRGGLHVILSEFHESPRIDRQLYGRAGRQGDKGSYESIVSLEDELFVLFSGEMARRVMSNSSFSNVITGMKAKLLRGSAQRSSERYYSRIRRQTVLEDQRLAKMLAFAGRGE.

ATP is bound by residues glutamine 119, 137–141 (GEGKS), and aspartate 546.

Belongs to the SecA family. Monomer and homodimer. Part of the essential Sec protein translocation apparatus which comprises SecA, SecYEG and auxiliary proteins SecDF-YajC and YidC.

It is found in the cell inner membrane. Its subcellular location is the cytoplasm. It catalyses the reaction ATP + H2O + cellular proteinSide 1 = ADP + phosphate + cellular proteinSide 2.. Part of the Sec protein translocase complex. Interacts with the SecYEG preprotein conducting channel. Has a central role in coupling the hydrolysis of ATP to the transfer of proteins into and across the cell membrane, serving both as a receptor for the preprotein-SecB complex and as an ATP-driven molecular motor driving the stepwise translocation of polypeptide chains across the membrane. The chain is Protein translocase subunit SecA 2 from Nitrosospira multiformis (strain ATCC 25196 / NCIMB 11849 / C 71).